A 138-amino-acid polypeptide reads, in one-letter code: ATP synthase epsilon chain (138 aa).

The protein belongs to the ATPase epsilon chain family. In terms of assembly, F-type ATPases have 2 components, CF(1) - the catalytic core - and CF(0) - the membrane proton channel. CF(1) has five subunits: alpha(3), beta(3), gamma(1), delta(1), epsilon(1). CF(0) has three main subunits: a, b and c.

The protein resides in the cellular thylakoid membrane. Produces ATP from ADP in the presence of a proton gradient across the membrane. This Cyanothece sp. (strain PCC 7425 / ATCC 29141) protein is ATP synthase epsilon chain.